The following is a 189-amino-acid chain: Small heat shock protein 21 (189 aa).

The segment at 26–53 (PPNFNPRKIAQGDNGKGQQVSRYGAGAG) is disordered. In terms of domain architecture, sHSP spans 77–183 (KYFVGFDDNV…HEKIVNIPIS (107 aa)).

This sequence belongs to the small heat shock protein (HSP20) family.

In terms of biological role, heat shock protein required for pathogenicity. Mediates thermotolerance and adaptation to oxidative stress and ethanol-induced stress. Required for invasive growth and filament formation under various filament inducing conditions. Plays a role in the capacity of damaging human-derived endothelial and oral epithelial cells during infection. Potentiates resistance to antifungal drugs, as well as resistance to killing by human neutrophils. Plays a major role in trehalose homeostasis in response to elevated temperatures. Regulates CEK1 activation by phosphorylation in response to elevated temperatures. This is Small heat shock protein 21 (HSP21) from Candida albicans (strain SC5314 / ATCC MYA-2876) (Yeast).